The following is a 718-amino-acid chain: Nucleolar protein 11 (718 aa).

Lys346 carries the N6-methyllysine modification.

In terms of assembly, interacts with UTP4. Interacts with FBL/fibrillarin in a transcription-dependent manner. May associate with the proposed t-UTP subcomplex of the SSU processome containing at least UTP4, WDR43, HEATR1, UTP15, WDR75.

The protein resides in the nucleus. Its subcellular location is the nucleolus. In terms of biological role, ribosome biogenesis factor. May be required for both optimal rDNA transcription and small subunit (SSU) pre-rRNA processing at sites A', A0, 1 and 2b. The sequence is that of Nucleolar protein 11 (NOL11) from Bos taurus (Bovine).